The sequence spans 347 residues: MPAAALLDDFLAFTLAGDAPAEQDGACAGGAVRWQWLGDGLLAFEPAAADAAARASVLVSAGVHGDETAPIELLSMLVRDLAAGALPLACRLLVVLGNVPAMRAGERYLDDDLNRLFSGRHAQVPASREAPRAAQLEAAAAAFFAAAPAGSARWHIDMHTAIRASVFEQFALLPHTGTPPTRAMIEWLGDARIAAVLLHTAKGNTYSHFTAEHCGALACTLELGKVRPFGQNDLARFAPADRAVRKLVSGGRAEVDAGGGHPSLPRVFTVIDQITKQSDALELFVAADVANFTAFARGTVLAQDGDYRYTVTHDEERIVFPNPTVKPGLRAGLLVIDTTRETIAALV.

Residues H64, E67, and H159 each coordinate Zn(2+). The active site involves E222.

Belongs to the AspA/AstE family. Succinylglutamate desuccinylase subfamily. Zn(2+) serves as cofactor.

The enzyme catalyses N-succinyl-L-glutamate + H2O = L-glutamate + succinate. It functions in the pathway amino-acid degradation; L-arginine degradation via AST pathway; L-glutamate and succinate from L-arginine: step 5/5. Functionally, transforms N(2)-succinylglutamate into succinate and glutamate. This is Succinylglutamate desuccinylase from Burkholderia cenocepacia (strain ATCC BAA-245 / DSM 16553 / LMG 16656 / NCTC 13227 / J2315 / CF5610) (Burkholderia cepacia (strain J2315)).